The primary structure comprises 69 residues: Small ribosomal subunit protein bS21 (69 aa).

Residues 50-69 form a disordered region; the sequence is KAFKRKQAKKVRKLKQKTNR.

Belongs to the bacterial ribosomal protein bS21 family.

The chain is Small ribosomal subunit protein bS21 from Borrelia garinii subsp. bavariensis (strain ATCC BAA-2496 / DSM 23469 / PBi) (Borreliella bavariensis).